A 417-amino-acid chain; its full sequence is Probable lysophospholipase BODYGUARD 4 (417 aa).

The first 49 residues, 1–49 (MSFPRKFGTAIHAALSFIVFFFLDLLDAILCVVYEFVDEILEENSTGCY), serve as a signal peptide directing secretion. A lipid anchor (N-palmitoyl cysteine) is attached at cysteine 50. The AB hydrolase-1 domain occupies 150-259 (VIFIHGFMGS…PPYFPSSVEG (110 aa)). Residue histidine 154 is part of the active site. Serine 225 acts as the Nucleophile in catalysis. Active-site charge relay system residues include aspartate 367 and histidine 395.

In terms of tissue distribution, expressed in epidermal cells.

The protein resides in the cell membrane. It is found in the secreted. The protein localises to the cell wall. Functionally, involved in cuticle development and morphogenesis. The sequence is that of Probable lysophospholipase BODYGUARD 4 from Arabidopsis thaliana (Mouse-ear cress).